A 277-amino-acid polypeptide reads, in one-letter code: Undecaprenyl-diphosphatase (277 aa).

The next 6 helical transmembrane spans lie at 47 to 67 (FNIIIQLAAILAVVWEFRGKI), 85 to 105 (VNLLIAFFPAVILGVLFADLI), 108 to 128 (WLFNPITVALALVVGGVIMLW), 183 to 203 (AATEFSFFLAMPTMVGAAVYS), 218 to 238 (VFAVGFVTSFVFAMVAVRALL), and 249 to 269 (FAWYRIAFGLLILATWQFHLI).

It belongs to the UppP family.

The protein resides in the cell inner membrane. It catalyses the reaction di-trans,octa-cis-undecaprenyl diphosphate + H2O = di-trans,octa-cis-undecaprenyl phosphate + phosphate + H(+). In terms of biological role, catalyzes the dephosphorylation of undecaprenyl diphosphate (UPP). Confers resistance to bacitracin. This is Undecaprenyl-diphosphatase from Pseudomonas paraeruginosa (strain DSM 24068 / PA7) (Pseudomonas aeruginosa (strain PA7)).